A 215-amino-acid chain; its full sequence is Small ribosomal subunit protein uS7 (215 aa).

This sequence belongs to the universal ribosomal protein uS7 family. In terms of assembly, part of the 30S ribosomal subunit.

Its function is as follows. One of the primary rRNA binding proteins, it binds directly to 16S rRNA where it nucleates assembly of the head domain of the 30S subunit. Is located at the subunit interface close to the decoding center. The sequence is that of Small ribosomal subunit protein uS7 from Thermococcus celer.